The following is a 599-amino-acid chain: Cytosolic Fe-S cluster assembly factor nar1 (599 aa).

[4Fe-4S] cluster contacts are provided by Cys20, Cys62, Cys65, Cys68, Cys210, Cys265, Cys468, and Cys472.

It belongs to the NARF family.

In terms of biological role, component of the cytosolic Fe/S protein assembly machinery. Required for maturation of extramitochondrial Fe/S proteins. May play a role in the transfer of pre-assembled Fe/S clusters to target apoproteins. The sequence is that of Cytosolic Fe-S cluster assembly factor nar1 (nar1) from Aspergillus terreus (strain NIH 2624 / FGSC A1156).